A 344-amino-acid chain; its full sequence is Arginine N-succinyltransferase (344 aa).

L125 provides a ligand contact to succinyl-CoA. H229 serves as the catalytic Proton donor.

This sequence belongs to the arginine N-succinyltransferase family.

It carries out the reaction succinyl-CoA + L-arginine = N(2)-succinyl-L-arginine + CoA + H(+). It participates in amino-acid degradation; L-arginine degradation via AST pathway; L-glutamate and succinate from L-arginine: step 1/5. In terms of biological role, catalyzes the transfer of succinyl-CoA to arginine to produce N(2)-succinylarginine. This is Arginine N-succinyltransferase from Escherichia coli O6:H1 (strain CFT073 / ATCC 700928 / UPEC).